Consider the following 379-residue polypeptide: Probable homogentisate phytyltransferase 2, chloroplastic (379 aa).

The interval Met1 to Leu39 is disordered. Residues Met1–Cys65 constitute a chloroplast transit peptide. A run of 8 helical transmembrane segments spans residues Trp121–Val141, Leu174–Ile194, Thr195–Leu215, Val220–Tyr240, Trp252–Ile272, Ile299–Phe319, Thr328–Leu348, and Tyr361–Leu378.

The protein belongs to the UbiA prenyltransferase family.

It is found in the plastid. The protein resides in the chloroplast thylakoid membrane. The enzyme catalyses phytyl diphosphate + homogentisate + H(+) = 2-methyl-6-phytyl-1,4-benzene-1,4-diol + CO2 + diphosphate. The protein operates within cofactor biosynthesis; tocopherol biosynthesis. In terms of biological role, involved in the synthesis of tocopherol (vitamin E). Catalyzes the condensation of homogentisate and phytyl diphosphate to form dimethylphytylhydrquinone. This Oryza sativa subsp. japonica (Rice) protein is Probable homogentisate phytyltransferase 2, chloroplastic (HPT2).